We begin with the raw amino-acid sequence, 124 residues long: Large ribosomal subunit protein bL12 (124 aa).

The tract at residues 94–124 (APKPVKESVPKAAAEEAKKKLEEAGAKAEIK) is disordered.

Belongs to the bacterial ribosomal protein bL12 family. In terms of assembly, homodimer. Part of the ribosomal stalk of the 50S ribosomal subunit. Forms a multimeric L10(L12)X complex, where L10 forms an elongated spine to which 2 to 4 L12 dimers bind in a sequential fashion. Binds GTP-bound translation factors.

Its function is as follows. Forms part of the ribosomal stalk which helps the ribosome interact with GTP-bound translation factors. Is thus essential for accurate translation. This Paraburkholderia phytofirmans (strain DSM 17436 / LMG 22146 / PsJN) (Burkholderia phytofirmans) protein is Large ribosomal subunit protein bL12.